Here is a 249-residue protein sequence, read N- to C-terminus: 1-(5-phosphoribosyl)-5-[(5-phosphoribosylamino)methylideneamino] imidazole-4-carboxamide isomerase (249 aa).

The active-site Proton acceptor is the D8. The active-site Proton donor is the D129.

Belongs to the HisA/HisF family.

Its subcellular location is the cytoplasm. The catalysed reaction is 1-(5-phospho-beta-D-ribosyl)-5-[(5-phospho-beta-D-ribosylamino)methylideneamino]imidazole-4-carboxamide = 5-[(5-phospho-1-deoxy-D-ribulos-1-ylimino)methylamino]-1-(5-phospho-beta-D-ribosyl)imidazole-4-carboxamide. The protein operates within amino-acid biosynthesis; L-histidine biosynthesis; L-histidine from 5-phospho-alpha-D-ribose 1-diphosphate: step 4/9. The chain is 1-(5-phosphoribosyl)-5-[(5-phosphoribosylamino)methylideneamino] imidazole-4-carboxamide isomerase from Nitratidesulfovibrio vulgaris (strain ATCC 29579 / DSM 644 / CCUG 34227 / NCIMB 8303 / VKM B-1760 / Hildenborough) (Desulfovibrio vulgaris).